We begin with the raw amino-acid sequence, 199 residues long: Transgelin-3 (199 aa).

Residues 24–136 enclose the Calponin-homology (CH) domain; it reads ADLENKLVDW…RTLMALGSVA (113 aa). At S163 the chain carries Phosphoserine. Residues 174–199 form a Calponin-like repeat; sequence IGLQMGSNKGASQAGMTGYGMPRQIM. Over residues 178-188 the composition is skewed to polar residues; the sequence is MGSNKGASQAG. The disordered stretch occupies residues 178-199; it reads MGSNKGASQAGMTGYGMPRQIM.

The protein belongs to the calponin family.

The chain is Transgelin-3 (TAGLN3) from Bos taurus (Bovine).